The sequence spans 129 residues: Ribosome-binding factor A (129 aa).

Belongs to the RbfA family. In terms of assembly, monomer. Binds 30S ribosomal subunits, but not 50S ribosomal subunits or 70S ribosomes.

Its subcellular location is the cytoplasm. In terms of biological role, one of several proteins that assist in the late maturation steps of the functional core of the 30S ribosomal subunit. Associates with free 30S ribosomal subunits (but not with 30S subunits that are part of 70S ribosomes or polysomes). Required for efficient processing of 16S rRNA. May interact with the 5'-terminal helix region of 16S rRNA. The chain is Ribosome-binding factor A from Azotobacter vinelandii (strain DJ / ATCC BAA-1303).